The chain runs to 190 residues: Elongation factor P (190 aa).

Belongs to the elongation factor P family.

The protein resides in the cytoplasm. It participates in protein biosynthesis; polypeptide chain elongation. Its function is as follows. Involved in peptide bond synthesis. Stimulates efficient translation and peptide-bond synthesis on native or reconstituted 70S ribosomes in vitro. Probably functions indirectly by altering the affinity of the ribosome for aminoacyl-tRNA, thus increasing their reactivity as acceptors for peptidyl transferase. The polypeptide is Elongation factor P (Amoebophilus asiaticus (strain 5a2)).